Consider the following 483-residue polypeptide: V-type proton ATPase subunit H (483 aa).

Residues S59 and S483 each carry the phosphoserine modification.

It belongs to the V-ATPase H subunit family. In terms of assembly, V-ATPase is a heteromultimeric enzyme made up of two complexes: the ATP-hydrolytic V1 complex and the proton translocation V0 complex. The V1 complex consists of three catalytic AB heterodimers that form a heterohexamer, three peripheral stalks each consisting of EG heterodimers, one central rotor including subunits D and F, and the regulatory subunits C and H. The proton translocation complex V0 consists of the proton transport subunit a, a ring of proteolipid subunits c9c'', rotary subunit d, subunits e and f, and the accessory subunits ATP6AP1/Ac45 and ATP6AP2/PRR. Interacts with AP2M1.

It is found in the cytoplasmic vesicle. It localises to the clathrin-coated vesicle membrane. Subunit of the V1 complex of vacuolar(H+)-ATPase (V-ATPase), a multisubunit enzyme composed of a peripheral complex (V1) that hydrolyzes ATP and a membrane integral complex (V0) that translocates protons. V-ATPase is responsible for acidifying and maintaining the pH of intracellular compartments and in some cell types, is targeted to the plasma membrane, where it is responsible for acidifying the extracellular environment. Subunit H is essential for V-ATPase activity, but not for the assembly of the complex. Involved in the endocytosis mediated by clathrin-coated pits, required for the formation of endosomes. This Mus musculus (Mouse) protein is V-type proton ATPase subunit H (Atp6v1h).